A 658-amino-acid polypeptide reads, in one-letter code: Threonine--tRNA ligase (658 aa).

In terms of domain architecture, TGS spans 1 to 64; the sequence is MSCSVSLSFP…GQSGQIEIIT (64 aa). The segment at 246 to 549 is catalytic; that stretch reads DHRRLGREMD…LIENFAGHMP (304 aa). Residues cysteine 343, histidine 394, and histidine 526 each coordinate Zn(2+).

This sequence belongs to the class-II aminoacyl-tRNA synthetase family. In terms of assembly, homodimer. Zn(2+) serves as cofactor.

The protein localises to the cytoplasm. It catalyses the reaction tRNA(Thr) + L-threonine + ATP = L-threonyl-tRNA(Thr) + AMP + diphosphate + H(+). In terms of biological role, catalyzes the attachment of threonine to tRNA(Thr) in a two-step reaction: L-threonine is first activated by ATP to form Thr-AMP and then transferred to the acceptor end of tRNA(Thr). Also edits incorrectly charged L-seryl-tRNA(Thr). The chain is Threonine--tRNA ligase from Bartonella quintana (strain Toulouse) (Rochalimaea quintana).